Consider the following 417-residue polypeptide: 4-hydroxy-3-methylbut-2-en-1-yl diphosphate synthase (flavodoxin) (417 aa).

[4Fe-4S] cluster-binding residues include C305, C308, C351, and E358.

It belongs to the IspG family. [4Fe-4S] cluster is required as a cofactor.

The catalysed reaction is (2E)-4-hydroxy-3-methylbut-2-enyl diphosphate + oxidized [flavodoxin] + H2O + 2 H(+) = 2-C-methyl-D-erythritol 2,4-cyclic diphosphate + reduced [flavodoxin]. It participates in isoprenoid biosynthesis; isopentenyl diphosphate biosynthesis via DXP pathway; isopentenyl diphosphate from 1-deoxy-D-xylulose 5-phosphate: step 5/6. Functionally, converts 2C-methyl-D-erythritol 2,4-cyclodiphosphate (ME-2,4cPP) into 1-hydroxy-2-methyl-2-(E)-butenyl 4-diphosphate. The polypeptide is 4-hydroxy-3-methylbut-2-en-1-yl diphosphate synthase (flavodoxin) (Nitrosomonas europaea (strain ATCC 19718 / CIP 103999 / KCTC 2705 / NBRC 14298)).